A 396-amino-acid chain; its full sequence is ATP-dependent RNA helicase eIF4A (396 aa).

The Q motif motif lies at 22-50 (YSFDDLKLKEELLRGIFGYGFVEPSAIQQ). Residues 53–223 (ILPIIEGKDV…SKFMKDPVRI (171 aa)) enclose the Helicase ATP-binding domain. 66–73 (AQSGTGKT) provides a ligand contact to ATP. The DEAD box motif lies at 171-174 (DEAD). The Helicase C-terminal domain maps to 234–395 (GIGQYYVNVE…ELPSSISELF (162 aa)).

This sequence belongs to the DEAD box helicase family. eIF4A subfamily. As to quaternary structure, component of the eIF4F complex, which composition varies with external and internal environmental conditions. It is composed of at least eIF4A, eIF4E and eIF4G.

Its subcellular location is the cytoplasm. It carries out the reaction ATP + H2O = ADP + phosphate + H(+). Functionally, ATP-dependent RNA helicase which is a subunit of the eIF4F complex involved in cap recognition and is required for mRNA binding to ribosome. In the current model of translation initiation, eIF4A unwinds RNA secondary structures in the 5'-UTR of mRNAs which is necessary to allow efficient binding of the small ribosomal subunit, and subsequent scanning for the initiator codon. The chain is ATP-dependent RNA helicase eIF4A (TIF1) from Kluyveromyces lactis (strain ATCC 8585 / CBS 2359 / DSM 70799 / NBRC 1267 / NRRL Y-1140 / WM37) (Yeast).